Reading from the N-terminus, the 127-residue chain is MNARINAEEIIRSIEAAHMKSDLPEIHVGDQVRVGVRIQEGGKERVQAFEGTVIAMRHSGCNRTITVRKIFQGIGVERVFLVHSPRIDSIQVLRRGKVRRAKLFYLRNRVGKATRIKAKTDSKEETL.

Belongs to the bacterial ribosomal protein bL19 family.

In terms of biological role, this protein is located at the 30S-50S ribosomal subunit interface and may play a role in the structure and function of the aminoacyl-tRNA binding site. In Synechococcus sp. (strain JA-3-3Ab) (Cyanobacteria bacterium Yellowstone A-Prime), this protein is Large ribosomal subunit protein bL19.